A 192-amino-acid polypeptide reads, in one-letter code: Transcription antitermination protein NusB (192 aa).

The protein belongs to the NusB family.

Its function is as follows. Involved in transcription antitermination. Required for transcription of ribosomal RNA (rRNA) genes. Binds specifically to the boxA antiterminator sequence of the ribosomal RNA (rrn) operons. The chain is Transcription antitermination protein NusB from Lactococcus lactis subsp. lactis (strain IL1403) (Streptococcus lactis).